The primary structure comprises 733 residues: Submandibular gland protein C (733 aa).

An N-terminal signal peptide occupies residues 1-20 (MKLILLYLAVVLCFVGKARS). A disordered region spans residues 48 to 91 (KSSGGSKDYNLSDGGKSNSRKNLSPATGGSATQQSNLDDSHAPN). N-linked (GlcNAc...) asparagine glycosylation occurs at Asn57. A compositionally biased stretch (polar residues) spans 62 to 84 (GKSNSRKNLSPATGGSATQQSNL). Asn141 and Asn187 each carry an N-linked (GlcNAc...) asparagine glycan. Disordered regions lie at residues 172 to 204 (GQQA…ADKP), 249 to 330 (LTED…NSSN), 369 to 450 (LTED…NSSN), and 496 to 733 (SVTE…PSVA). The span at 186–199 (ENSSLSTGSATSNK) shows a compositional bias: polar residues. Residues 256–270 (TSTSASVSGDSSTSS) show a composition bias toward low complexity. A compositionally biased stretch (polar residues) spans 300–318 (GSKQNVEDSTLSTGSATSN). Asn327 carries an N-linked (GlcNAc...) asparagine glycan. Residues 376-390 (TSTSASVSGDSSTSS) are compositionally biased toward low complexity. Residues 420 to 438 (GSKQNVEDSTLSTGSATSN) are compositionally biased toward polar residues. Asn447, Asn514, and Asn528 each carry an N-linked (GlcNAc...) asparagine glycan. Composition is skewed to polar residues over residues 496–516 (SVTE…NNLS) and 525–535 (NPTNGSSSASS). The span at 538 to 552 (KPYEEGMRKLLKFLE) shows a compositional bias: basic and acidic residues. Low complexity-rich tracts occupy residues 563 to 574 (SVSGMSSESSRS) and 609 to 619 (SSNSSTGSATS). N-linked (GlcNAc...) asparagine glycosylation occurs at Asn611. Gly residues predominate over residues 654 to 665 (GFNGPEGVGENN). The segment covering 677–701 (GSKSDSGSHNLSSGSGSRSNVSTGG) has biased composition (low complexity). N-linked (GlcNAc...) asparagine glycosylation is found at Asn686 and Asn696. A compositionally biased stretch (polar residues) spans 722–733 (TGKTQSGSPSVA).

Post-translationally, N-glycosylated. As to expression, detected in terminal tubule cells of the submandibular gland (at protein level). Expressed in submandibular salivary glands of 3-day-old males but not adults. Expression in adult submandibular glands is restricted to females. Isoform 5 is expressed in both 3-day-old and adult sublingual glands.

The protein resides in the secreted. This chain is Submandibular gland protein C (Muc19), found in Mus musculus (Mouse).